A 451-amino-acid chain; its full sequence is Chromosomal replication initiator protein DnaA (451 aa).

A domain I, interacts with DnaA modulators region spans residues Met-1–Glu-93. Positions Glu-88–Ser-108 are disordered. The interval Gln-94–Thr-113 is domain II. The domain III, AAA+ region stretch occupies residues Met-114–Ser-330. Positions 158, 160, 161, and 162 each coordinate ATP. A domain IV, binds dsDNA region spans residues Ser-331–Gln-451.

This sequence belongs to the DnaA family. In terms of assembly, oligomerizes as a right-handed, spiral filament on DNA at oriC.

The protein resides in the cytoplasm. Its function is as follows. Plays an essential role in the initiation and regulation of chromosomal replication. ATP-DnaA binds to the origin of replication (oriC) to initiate formation of the DNA replication initiation complex once per cell cycle. Binds the DnaA box (a 9 base pair repeat at the origin) and separates the double-stranded (ds)DNA. Forms a right-handed helical filament on oriC DNA; dsDNA binds to the exterior of the filament while single-stranded (ss)DNA is stabiized in the filament's interior. The ATP-DnaA-oriC complex binds and stabilizes one strand of the AT-rich DNA unwinding element (DUE), permitting loading of DNA polymerase. After initiation quickly degrades to an ADP-DnaA complex that is not apt for DNA replication. Binds acidic phospholipids. In Shouchella clausii (strain KSM-K16) (Alkalihalobacillus clausii), this protein is Chromosomal replication initiator protein DnaA.